The sequence spans 68 residues: Large ribosomal subunit protein uL29 (68 aa).

The protein belongs to the universal ribosomal protein uL29 family.

In Rhodospirillum rubrum (strain ATCC 11170 / ATH 1.1.1 / DSM 467 / LMG 4362 / NCIMB 8255 / S1), this protein is Large ribosomal subunit protein uL29.